The following is a 119-amino-acid chain: EF-hand calcium-binding domain-containing protein 2 (119 aa).

Positions 1–22 (MKVAVVLIVVLVVMMIGQETDS) are cleaved as a signal peptide. Positions 82 to 117 (VDDNGFVEFKATYDVDGDGVVQVEEYETVVELTENL) constitute an EF-hand domain. Ca(2+) is bound by residues D95, D97, D99, and E106.

Component of the acid-soluble organic matrix of calcified layers of the shell (at protein level).

It is found in the secreted. The polypeptide is EF-hand calcium-binding domain-containing protein 2 (Lottia gigantea (Giant owl limpet)).